A 122-amino-acid polypeptide reads, in one-letter code: Large ribosomal subunit protein uL14 (122 aa).

The protein belongs to the universal ribosomal protein uL14 family. Part of the 50S ribosomal subunit. Forms a cluster with proteins L3 and L19. In the 70S ribosome, L14 and L19 interact and together make contacts with the 16S rRNA in bridges B5 and B8.

Its function is as follows. Binds to 23S rRNA. Forms part of two intersubunit bridges in the 70S ribosome. This is Large ribosomal subunit protein uL14 from Shewanella baltica (strain OS223).